A 424-amino-acid polypeptide reads, in one-letter code: Hemagglutinin-esterase (424 aa).

Positions 1–16 (MFLLPRFVLVSCIIGS) are cleaved as a signal peptide. Residues 7-127 (FVLVSCIIGS…SNDIWMQNKG (121 aa)) form an esterase domain 1 region. Residues 17-392 (LGFDNPPTNV…PICVYDPLPI (376 aa)) are Virion surface-facing. Ser40 serves as the catalytic Nucleophile. Cys44 and Cys65 are joined by a disulfide. Residues Asn54, Asn89, Asn153, Asn236, and Asn301 are each glycosylated (N-linked (GlcNAc...) asparagine; by host). Intrachain disulfides connect Cys113–Cys162, Cys197–Cys276, and Cys205–Cys249. Residues 128-266 (LFYTQVYKNM…GNYLAISNEL (139 aa)) are receptor binding. The interval 267-379 (LLTVPTKAIC…RCPTAADINT (113 aa)) is esterase domain 2. A disulfide bridge links Cys307 with Cys312. A glycan (N-linked (GlcNAc...) asparagine; by host) is linked at Asn316. Active-site charge relay system residues include Asp326 and His329. A disulfide bridge links Cys347 with Cys371. An N-linked (GlcNAc...) asparagine; by host glycan is attached at Asn358. Residues 393–413 (ILLGILLGVAVIIIVVLLLYF) form a helical membrane-spanning segment. Residues 414–424 (MVDNGTRLHDA) lie on the Intravirion side of the membrane. N-linked (GlcNAc...) asparagine; by host glycosylation is present at Asn417.

Belongs to the influenza type C/coronaviruses hemagglutinin-esterase family. As to quaternary structure, homodimer; disulfide-linked. Forms a complex with the M protein in the pre-Golgi. Associates then with S-M complex to form a ternary complex S-M-HE. Post-translationally, N-glycosylated in the RER. N-glycosylated in the host RER.

The protein localises to the virion membrane. It localises to the host cell membrane. The enzyme catalyses N-acetyl-9-O-acetylneuraminate + H2O = N-acetylneuraminate + acetate + H(+). The catalysed reaction is N-acetyl-4-O-acetylneuraminate + H2O = N-acetylneuraminate + acetate + H(+). In terms of biological role, structural protein that makes short spikes at the surface of the virus. Contains receptor binding and receptor-destroying activities. Mediates de-O-acetylation of N-acetyl-4-O-acetylneuraminic acid, which is probably the receptor determinant recognized by the virus on the surface of erythrocytes and susceptible cells. This receptor-destroying activity is important for virus release as it probably helps preventing self-aggregation and ensures the efficient spread of the progeny virus from cell to cell. May serve as a secondary viral attachment protein for initiating infection, the spike protein being the major one. May become a target for both the humoral and the cellular branches of the immune system. The chain is Hemagglutinin-esterase from Bovine coronavirus (strain 98TXSF-110-ENT) (BCoV-ENT).